Consider the following 322-residue polypeptide: Probable transposase for insertion sequence element ISA1214 (322 aa).

This sequence belongs to the transposase 11 family.

Involved in the transposition of the insertion sequence ISA1214. The polypeptide is Probable transposase for insertion sequence element ISA1214 (Archaeoglobus fulgidus (strain ATCC 49558 / DSM 4304 / JCM 9628 / NBRC 100126 / VC-16)).